We begin with the raw amino-acid sequence, 166 residues long: Cyclic pyranopterin monophosphate synthase (166 aa).

Residues 83–85 (LCH) and 121–122 (ME) contribute to the substrate site. Aspartate 136 is an active-site residue.

The protein belongs to the MoaC family. As to quaternary structure, homohexamer; trimer of dimers.

The enzyme catalyses (8S)-3',8-cyclo-7,8-dihydroguanosine 5'-triphosphate = cyclic pyranopterin phosphate + diphosphate. It participates in cofactor biosynthesis; molybdopterin biosynthesis. Functionally, catalyzes the conversion of (8S)-3',8-cyclo-7,8-dihydroguanosine 5'-triphosphate to cyclic pyranopterin monophosphate (cPMP). This Syntrophobacter fumaroxidans (strain DSM 10017 / MPOB) protein is Cyclic pyranopterin monophosphate synthase.